Consider the following 714-residue polypeptide: SEC14 domain and spectrin repeat-containing protein 1 (714 aa).

In terms of domain architecture, CRAL-TRIO spans 1 to 153 (MEASCILPVL…EFGGSLLYDH (153 aa)). Spectrin repeat units follow at residues 275 to 381 (SQLE…NVLQ), 384 to 497 (YEFH…LKML), and 503 to 605 (FKCE…HRLE). A disordered region spans residues 691–714 (EAEQRLEEEEEEEEAALEVEPRES). A compositionally biased stretch (acidic residues) spans 696 to 707 (LEEEEEEEEAAL).

The protein belongs to the SOLO family.

Its function is as follows. May act as the primary docking protein directing membrane turnover and assembly of the transient receptor potential channels trpc4 and trpc5. Binds phospholipids. This is SEC14 domain and spectrin repeat-containing protein 1 (sestd1) from Danio rerio (Zebrafish).